A 1101-amino-acid polypeptide reads, in one-letter code: Protein diaphanous homolog 2 (1101 aa).

Met-1 carries the post-translational modification N-acetylmethionine. A disordered region spans residues 1–44; sequence MEQPGAAASGAGGGSEEPGGGRSNKRSAGNRAANEEETKNKPKL. The span at 10–22 shows a compositional bias: gly residues; that stretch reads GAGGGSEEPGGGR. In terms of domain architecture, GBD/FH3 spans 98 to 464; that stretch reads SLNLSEKEVL…QIVLHCSGMD (367 aa). Coiled-coil stretches lie at residues 366–418 and 487–547; these read KEKE…MLKD and KAKV…SSSG. Residues 536–546 are compositionally biased toward polar residues; that stretch reads RTQAQVLSSSS. 3 disordered regions span residues 536–594, 1010–1048, and 1070–1101; these read RTQA…PPPP, NKRR…DINK, and RDRR…ISSK. Residues 549 to 594 are compositionally biased toward pro residues; the sequence is PGPPAAPPLPGVGPPPPPPAPPLPGGAPLPPPPPPLPGMMGIPPPP. Positions 549–623 constitute an FH1 domain; sequence PGPPAAPPLP…PPPGISLNLP (75 aa). An FH2 domain is found at 628–1028; sequence QKKMYKPEVS…TRRAKLAKEK (401 aa). Residues 903-1053 adopt a coiled-coil conformation; it reads SASKVSAQIL…IDINKEGDET (151 aa). 2 stretches are compositionally biased toward basic and acidic residues: residues 1010–1035 and 1078–1090; these read NKRR…EKLE and RNPD…LERS. The region spanning 1051-1081 is the DAD domain; that stretch reads DETGVMDNLLEALQSGAAFRDRRKRIPRNPD.

The protein belongs to the formin homology family. Diaphanous subfamily. In terms of assembly, isoform 3 interacts with RHOD in the GTP-bound form. Expressed in testis, ovary, small intestine, prostate, lung, liver, kidney and leukocytes.

The protein resides in the cytoplasm. Its subcellular location is the cytosol. The protein localises to the early endosome. Functionally, could be involved in oogenesis. Involved in the regulation of endosome dynamics. Implicated in a novel signal transduction pathway, in which isoform 3 and CSK are sequentially activated by RHOD to regulate the motility of early endosomes through interactions with the actin cytoskeleton. This chain is Protein diaphanous homolog 2 (DIAPH2), found in Homo sapiens (Human).